A 351-amino-acid chain; its full sequence is Protein RecA (351 aa).

Residue Gly68–Thr75 coordinates ATP.

The protein belongs to the RecA family.

Its subcellular location is the cytoplasm. Its function is as follows. Can catalyze the hydrolysis of ATP in the presence of single-stranded DNA, the ATP-dependent uptake of single-stranded DNA by duplex DNA, and the ATP-dependent hybridization of homologous single-stranded DNAs. It interacts with LexA causing its activation and leading to its autocatalytic cleavage. The polypeptide is Protein RecA (Chloroflexus aggregans (strain MD-66 / DSM 9485)).